Consider the following 258-residue polypeptide: Large ribosomal subunit protein bL28m (258 aa).

Residues 1–21 constitute a mitochondrion transit peptide; it reads MQKIFRPFQLTRGFTSSVKNF.

This sequence belongs to the bacterial ribosomal protein bL28 family. In terms of assembly, component of the mitochondrial large ribosomal subunit (mt-LSU). Mature yeast 74S mitochondrial ribosomes consist of a small (37S) and a large (54S) subunit. The 37S small subunit contains a 15S ribosomal RNA (15S mt-rRNA) and 34 different proteins. The 54S large subunit contains a 21S rRNA (21S mt-rRNA) and 46 different proteins.

It localises to the mitochondrion. Its function is as follows. Component of the mitochondrial ribosome (mitoribosome), a dedicated translation machinery responsible for the synthesis of mitochondrial genome-encoded proteins, including at least some of the essential transmembrane subunits of the mitochondrial respiratory chain. The mitoribosomes are attached to the mitochondrial inner membrane and translation products are cotranslationally integrated into the membrane. The sequence is that of Large ribosomal subunit protein bL28m (MRPL24) from Saccharomyces cerevisiae (strain ATCC 204508 / S288c) (Baker's yeast).